A 156-amino-acid chain; its full sequence is Low molecular weight phosphotyrosine protein phosphatase (156 aa).

Cysteine 11 acts as the Nucleophile in catalysis. Arginine 17 is a catalytic residue. The active-site Proton donor is aspartate 128.

This sequence belongs to the low molecular weight phosphotyrosine protein phosphatase family.

The protein resides in the cytoplasm. The catalysed reaction is O-phospho-L-tyrosyl-[protein] + H2O = L-tyrosyl-[protein] + phosphate. It carries out the reaction a phosphate monoester + H2O = an alcohol + phosphate. Functionally, may contribute to dephosphorylation of 'Tyr-15' of cdc2. The chain is Low molecular weight phosphotyrosine protein phosphatase (stp1) from Schizosaccharomyces pombe (strain 972 / ATCC 24843) (Fission yeast).